The primary structure comprises 677 residues: Gamma-tubulin complex subunit mod21 (677 aa).

Component of the gamma-tubulin complex composed of at least alp4, alp6, alp16, ghf1, gtb1 and mod21.

It localises to the cytoplasm. It is found in the cytoskeleton. The protein resides in the microtubule organizing center. Its subcellular location is the spindle pole body. Component of the gamma-tubulin complex that is required for the regulation of both interphase microtubule organization and nucleation, and mitotic bipolar spindles. Required for correct septation. The protein is Gamma-tubulin complex subunit mod21 of Schizosaccharomyces pombe (strain 972 / ATCC 24843) (Fission yeast).